A 398-amino-acid chain; its full sequence is Arginine biosynthesis bifunctional protein ArgJ (398 aa).

Positions 148, 174, 185, 271, 393, and 398 each coordinate substrate. Thr-185 (nucleophile) is an active-site residue.

It belongs to the ArgJ family. Heterotetramer of two alpha and two beta chains.

It is found in the cytoplasm. It carries out the reaction N(2)-acetyl-L-ornithine + L-glutamate = N-acetyl-L-glutamate + L-ornithine. The catalysed reaction is L-glutamate + acetyl-CoA = N-acetyl-L-glutamate + CoA + H(+). It participates in amino-acid biosynthesis; L-arginine biosynthesis; L-ornithine and N-acetyl-L-glutamate from L-glutamate and N(2)-acetyl-L-ornithine (cyclic): step 1/1. It functions in the pathway amino-acid biosynthesis; L-arginine biosynthesis; N(2)-acetyl-L-ornithine from L-glutamate: step 1/4. Its function is as follows. Catalyzes two activities which are involved in the cyclic version of arginine biosynthesis: the synthesis of N-acetylglutamate from glutamate and acetyl-CoA as the acetyl donor, and of ornithine by transacetylation between N(2)-acetylornithine and glutamate. The polypeptide is Arginine biosynthesis bifunctional protein ArgJ (Listeria monocytogenes serotype 4b (strain F2365)).